Here is a 145-residue protein sequence, read N- to C-terminus: D-aminoacyl-tRNA deacylase (145 aa).

A Gly-cisPro motif, important for rejection of L-amino acids motif is present at residues 137–138 (GP).

The protein belongs to the DTD family. As to quaternary structure, homodimer.

The protein resides in the cytoplasm. The catalysed reaction is glycyl-tRNA(Ala) + H2O = tRNA(Ala) + glycine + H(+). It catalyses the reaction a D-aminoacyl-tRNA + H2O = a tRNA + a D-alpha-amino acid + H(+). Functionally, an aminoacyl-tRNA editing enzyme that deacylates mischarged D-aminoacyl-tRNAs. Also deacylates mischarged glycyl-tRNA(Ala), protecting cells against glycine mischarging by AlaRS. Acts via tRNA-based rather than protein-based catalysis; rejects L-amino acids rather than detecting D-amino acids in the active site. By recycling D-aminoacyl-tRNA to D-amino acids and free tRNA molecules, this enzyme counteracts the toxicity associated with the formation of D-aminoacyl-tRNA entities in vivo and helps enforce protein L-homochirality. This is D-aminoacyl-tRNA deacylase from Lactobacillus delbrueckii subsp. bulgaricus (strain ATCC BAA-365 / Lb-18).